A 147-amino-acid chain; its full sequence is Large ribosomal subunit protein bL9 (147 aa).

The protein belongs to the bacterial ribosomal protein bL9 family.

Its function is as follows. Binds to the 23S rRNA. The chain is Large ribosomal subunit protein bL9 from Clostridium botulinum (strain ATCC 19397 / Type A).